A 159-amino-acid chain; its full sequence is Cytochrome b6-f complex subunit 4 (159 aa).

3 consecutive transmembrane segments (helical) span residues 35 to 55 (ILIFGVVILGTIFGVIALAVL), 93 to 113 (LLGVVLMAAIPIGLALVPFIE), and 127 to 147 (ATAVFLIGTVVTMYLGIGAMI).

The protein belongs to the cytochrome b family. PetD subfamily. In terms of assembly, the 4 large subunits of the cytochrome b6-f complex are cytochrome b6, subunit IV (17 kDa polypeptide, PetD), cytochrome f and the Rieske protein, while the 4 small subunits are PetG, PetL, PetM and PetN. The complex functions as a dimer.

It is found in the cell inner membrane. Functionally, component of the cytochrome b6-f complex, which mediates electron transfer between photosystem II (PSII) and photosystem I (PSI), cyclic electron flow around PSI, and state transitions. This chain is Cytochrome b6-f complex subunit 4, found in Gloeobacter violaceus (strain ATCC 29082 / PCC 7421).